Reading from the N-terminus, the 151-residue chain is Large ribosomal subunit protein bL9 (151 aa).

It belongs to the bacterial ribosomal protein bL9 family.

Its function is as follows. Binds to the 23S rRNA. The sequence is that of Large ribosomal subunit protein bL9 from Mycolicibacterium smegmatis (strain ATCC 700084 / mc(2)155) (Mycobacterium smegmatis).